A 291-amino-acid polypeptide reads, in one-letter code: Formamidopyrimidine-DNA glycosylase (291 aa).

P2 serves as the catalytic Schiff-base intermediate with DNA. Catalysis depends on E3, which acts as the Proton donor. The active-site Proton donor; for beta-elimination activity is K58. DNA is bound by residues H100, R123, and K166. The FPG-type zinc finger occupies 257–291 (SVYGREGKECLQCGTPIIRILQSGRSSFYCSQCQK). Catalysis depends on R281, which acts as the Proton donor; for delta-elimination activity.

This sequence belongs to the FPG family. In terms of assembly, monomer. Requires Zn(2+) as cofactor.

It carries out the reaction Hydrolysis of DNA containing ring-opened 7-methylguanine residues, releasing 2,6-diamino-4-hydroxy-5-(N-methyl)formamidopyrimidine.. The catalysed reaction is 2'-deoxyribonucleotide-(2'-deoxyribose 5'-phosphate)-2'-deoxyribonucleotide-DNA = a 3'-end 2'-deoxyribonucleotide-(2,3-dehydro-2,3-deoxyribose 5'-phosphate)-DNA + a 5'-end 5'-phospho-2'-deoxyribonucleoside-DNA + H(+). Its function is as follows. Involved in base excision repair of DNA damaged by oxidation or by mutagenic agents. Acts as a DNA glycosylase that recognizes and removes damaged bases. Has a preference for oxidized purines, such as 7,8-dihydro-8-oxoguanine (8-oxoG). Has AP (apurinic/apyrimidinic) lyase activity and introduces nicks in the DNA strand. Cleaves the DNA backbone by beta-delta elimination to generate a single-strand break at the site of the removed base with both 3'- and 5'-phosphates. In Bartonella tribocorum (strain CIP 105476 / IBS 506), this protein is Formamidopyrimidine-DNA glycosylase.